Consider the following 173-residue polypeptide: Disulfide bond formation protein B (173 aa).

The Cytoplasmic segment spans residues 1 to 16 (MRILSSLKTFSQSRLS). The chain crosses the membrane as a helical span at residues 17 to 33 (WLLLLAFVVFFTLCAMY). Residues 34 to 51 (FQHVMLLAPCVMCIYERI) lie on the Periplasmic side of the membrane. Cys-43 and Cys-46 are disulfide-bonded. The chain crosses the membrane as a helical span at residues 52 to 67 (AMLGIGVAALIGAIAP). The Cytoplasmic segment spans residues 68–74 (QNPVVRW). The chain crosses the membrane as a helical span at residues 75–92 (LGFAAWGASSYKGLMLAI). The Periplasmic portion of the chain corresponds to 93 to 147 (EHVNYQFNPSPFATCDLFVTFPAWAPLNQWAPNLFEAYGDCSKVVWQFLTLSMPQ). Cys-107 and Cys-133 are joined by a disulfide. A helical transmembrane segment spans residues 148–166 (WLVVIFAANLLALAIFVVA). At 167-173 (QLAKTSR) the chain is on the cytoplasmic side.

This sequence belongs to the DsbB family.

The protein localises to the cell inner membrane. In terms of biological role, required for disulfide bond formation in some periplasmic proteins. Acts by oxidizing the DsbA protein. The protein is Disulfide bond formation protein B of Vibrio cholerae serotype O1 (strain ATCC 39315 / El Tor Inaba N16961).